Consider the following 245-residue polypeptide: tRNA pseudouridine synthase A (245 aa).

Asp-52 (nucleophile) is an active-site residue. Tyr-111 serves as a coordination point for substrate.

It belongs to the tRNA pseudouridine synthase TruA family. In terms of assembly, homodimer.

The catalysed reaction is uridine(38/39/40) in tRNA = pseudouridine(38/39/40) in tRNA. Its function is as follows. Formation of pseudouridine at positions 38, 39 and 40 in the anticodon stem and loop of transfer RNAs. The polypeptide is tRNA pseudouridine synthase A (Bradyrhizobium diazoefficiens (strain JCM 10833 / BCRC 13528 / IAM 13628 / NBRC 14792 / USDA 110)).